We begin with the raw amino-acid sequence, 144 residues long: MKSFMASPATIERKWYVVDATGHTLGRLSSEIAKVLRGKNKAIYTPHIDTGDYVIVVNADKIKVTGKKMDQKIYFSHSDYPGGVRETTLKEMLAKKPEDVITLAVKGMLPKGPLGRSMLNKLHVYAGPEHNNAAQKPEVLEIKY.

This sequence belongs to the universal ribosomal protein uL13 family. In terms of assembly, part of the 50S ribosomal subunit.

This protein is one of the early assembly proteins of the 50S ribosomal subunit, although it is not seen to bind rRNA by itself. It is important during the early stages of 50S assembly. This is Large ribosomal subunit protein uL13 from Lachnoclostridium phytofermentans (strain ATCC 700394 / DSM 18823 / ISDg) (Clostridium phytofermentans).